The sequence spans 316 residues: tRNA dimethylallyltransferase (316 aa).

Position 17-24 (17-24 (GPTASGKT)) interacts with ATP. Residue 19 to 24 (TASGKT) participates in substrate binding. 4 interaction with substrate tRNA regions span residues 42–45 (DSAL), 166–170 (QRLSR), 247–252 (RCVGYR), and 280–287 (KRQITWLR).

The protein belongs to the IPP transferase family. Monomer. Mg(2+) is required as a cofactor.

The enzyme catalyses adenosine(37) in tRNA + dimethylallyl diphosphate = N(6)-dimethylallyladenosine(37) in tRNA + diphosphate. In terms of biological role, catalyzes the transfer of a dimethylallyl group onto the adenine at position 37 in tRNAs that read codons beginning with uridine, leading to the formation of N6-(dimethylallyl)adenosine (i(6)A). This Shigella dysenteriae serotype 1 (strain Sd197) protein is tRNA dimethylallyltransferase.